The following is a 941-amino-acid chain: UvrABC system protein A (941 aa).

31 to 38 (GLSGSGKS) serves as a coordination point for ATP. The segment at 253–280 (CPICGYSMRELEPRLFSFNNPAGACPTC) adopts a C4-type zinc-finger fold. ABC transporter domains are found at residues 310–587 (WDRR…PESL) and 607–937 (ANPE…RFLK). 640–647 (GVSGSGKS) lines the ATP pocket. A C4-type zinc finger spans residues 740–766 (CEACQGDGVIKVEMHFLPDIYVPCDQC).

Belongs to the ABC transporter superfamily. UvrA family. In terms of assembly, forms a heterotetramer with UvrB during the search for lesions.

It is found in the cytoplasm. In terms of biological role, the UvrABC repair system catalyzes the recognition and processing of DNA lesions. UvrA is an ATPase and a DNA-binding protein. A damage recognition complex composed of 2 UvrA and 2 UvrB subunits scans DNA for abnormalities. When the presence of a lesion has been verified by UvrB, the UvrA molecules dissociate. The sequence is that of UvrABC system protein A from Salmonella typhi.